Reading from the N-terminus, the 231-residue chain is Chromosome partition protein MukE (231 aa).

The tract at residues 197-231 is disordered; the sequence is RDGEAMPIEGGLSLDDSENDETSDNSAEGTGDEQP.

Belongs to the MukE family. Interacts, and probably forms a ternary complex, with MukF and MukB. The complex formation is stimulated by calcium or magnesium.

It is found in the cytoplasm. It localises to the nucleoid. Involved in chromosome condensation, segregation and cell cycle progression. May participate in facilitating chromosome segregation by condensation DNA from both sides of a centrally located replisome during cell division. Probably acts via its interaction with MukB and MukF. This Photorhabdus laumondii subsp. laumondii (strain DSM 15139 / CIP 105565 / TT01) (Photorhabdus luminescens subsp. laumondii) protein is Chromosome partition protein MukE.